Here is a 182-residue protein sequence, read N- to C-terminus: UPF0397 protein BCAH187_A2708 (182 aa).

5 helical membrane-spanning segments follow: residues valine 9–isoleucine 29, alanine 40–isoleucine 60, tryptophan 71–isoleucine 91, isoleucine 114–valine 134, and isoleucine 142–leucine 162.

This sequence belongs to the UPF0397 family.

The protein resides in the cell membrane. The polypeptide is UPF0397 protein BCAH187_A2708 (Bacillus cereus (strain AH187)).